We begin with the raw amino-acid sequence, 113 residues long: Protein translation factor SUI1 homolog 2 (113 aa).

S2 carries the N-acetylserine modification.

It belongs to the SUI1 family.

Probably involved in translation. This is Protein translation factor SUI1 homolog 2 from Arabidopsis thaliana (Mouse-ear cress).